Consider the following 2523-residue polypeptide: uncharacterized protein (2523 aa).

This sequence belongs to the mycobacterial PPE family.

Its function is as follows. Probably plays a role in host phagosome maturation arrest. This is an uncharacterized protein from Mycobacterium tuberculosis (strain ATCC 25618 / H37Rv).